The sequence spans 214 residues: ATP-dependent Clp protease proteolytic subunit (214 aa).

The active-site Nucleophile is Ser113. His138 is a catalytic residue.

It belongs to the peptidase S14 family. Fourteen ClpP subunits assemble into 2 heptameric rings which stack back to back to give a disk-like structure with a central cavity, resembling the structure of eukaryotic proteasomes.

The protein localises to the cytoplasm. It carries out the reaction Hydrolysis of proteins to small peptides in the presence of ATP and magnesium. alpha-casein is the usual test substrate. In the absence of ATP, only oligopeptides shorter than five residues are hydrolyzed (such as succinyl-Leu-Tyr-|-NHMec, and Leu-Tyr-Leu-|-Tyr-Trp, in which cleavage of the -Tyr-|-Leu- and -Tyr-|-Trp bonds also occurs).. Functionally, cleaves peptides in various proteins in a process that requires ATP hydrolysis. Has a chymotrypsin-like activity. Plays a major role in the degradation of misfolded proteins. This chain is ATP-dependent Clp protease proteolytic subunit, found in Alkalilimnicola ehrlichii (strain ATCC BAA-1101 / DSM 17681 / MLHE-1).